A 1057-amino-acid chain; its full sequence is MTSSVLIQGYEEDDVLKLLQELLDAETSQSCADVGKKIAQLFSNDNPLVTLKTTGFLDGLERAARNKKSGFHREAAMIGFATVIKNLGTPSEVVFLPYLPTILDSFSDRGEVVRQAAKMAAQALLDCLPAGAVETRLIPSLISYLDDSSIKWPSKVAALQLLGSLASSSPKAVADYMAALIPCIKERMHDTKPEISRAAITCMLNLCSVVENNDIIPHIPKLVDCMAHPETLEACIKDLSATTFVATVESVALAVLVPILKRALAQRSQSMLRLTVIITDNLCKLVPDPAEASDFLPELIPDVERIAQTAAMPEVRALASHALTTLNKAAAAQAAKAANNSEKQALDSACKELREAVLKNTSVPHELANSIIDYVCDALAALYKSNNFDKDKWTSQLGVLYLSPLVGEELASQISSKIYDDLHAFYKSLNSVDGISNLTIEEEELVNTDFSLAYGGRLLLSHTNLHLYRGHRYGVVGHNGCGKSTLLRAIGDYKVENFPSPDEVKTCFVAHSLQGEDTSMAILDFVAQDKALLTMNVTRQEAADALHSVGFTAEMQENPVASLSGGWKMKLELARAMLQKADILLLDEPTNHLDVANIAWLEAYLTSQKNITCLIVSHDSSFLDHVCTDIIHYEGVKNQAKKLGYYQGNLSAFVKVKPEAKSYYTLTATNEKFVFPPPGILTGVRSNTRLILKMTNASYTYPNAKKKSLDNVTVGLSLSSRVAILGPNGAGKSTLIKVLIGEVIPQEGKVFKHPNLRVGYVAQHAFHHLDQHLEKTPSQYIQWRYAGGQDREVSEKESRKLTEEDRAQLQRDITVNGERRRVEALIGRQKLKKSFQYEIKWFGKPHKYNTWVSREILLENGFQKFVQAFDDMESSREGLGFRELIPEDIRAHFEDVGLPGDIADYSPISSLSGGQKVKVVIAACLWNNPQLLVLDEPTNFLDRDALGGLAVAIRDWEGGVVMISHNEEFVSALCPEHWHVEAGKVTGKGKTAVDDGKFEDLSEKDLKKIEAKATKKKKLTRNEIKAKERRARERELAWLQSPKGTEKPKSFFSDDEE.

2 ABC transporter domains span residues 440–659 (IEEE…VKPE) and 692–1019 (LKMT…KKKL). ATP is bound by residues 477-484 (GHNGCGKS) and 726-733 (GPNGAGKS). Ser733 carries the post-translational modification Phosphoserine. The 50-residue stretch at 820 to 869 (RRVEALIGRQKLKKSFQYEIKWFGKPHKYNTWVSREILLENGFQKFVQAF) folds into the Chromo domain. A compositionally biased stretch (basic and acidic residues) spans 1020 to 1036 (TRNEIKAKERRAREREL). Residues 1020 to 1057 (TRNEIKAKERRARERELAWLQSPKGTEKPKSFFSDDEE) are disordered. 2 positions are modified to phosphoserine: Ser1041 and Ser1053.

This sequence belongs to the ABC transporter superfamily. ABCF family. EF3 subfamily.

It localises to the cytoplasm. Its subcellular location is the nucleus. Functionally, has a direct role in the mRNA export process. Appears to act within the rae1 mediated mRNA export pathway. The chain is mRNA export factor elf1 (elf1) from Schizosaccharomyces pombe (strain 972 / ATCC 24843) (Fission yeast).